Consider the following 308-residue polypeptide: Oxygen-dependent coproporphyrinogen-III oxidase (308 aa).

Residue S100 coordinates substrate. Residues H104 and H114 each coordinate a divalent metal cation. H114 acts as the Proton donor in catalysis. 116-118 serves as a coordination point for substrate; it reads NFR. A divalent metal cation is bound by residues H153 and H183. Residues 248 to 283 are important for dimerization; the sequence is YVEFNLVFDRGTIFGLQSGGRTESILSSMPPMASWR. 266 to 268 lines the substrate pocket; the sequence is GGR.

This sequence belongs to the aerobic coproporphyrinogen-III oxidase family. Homodimer. Requires a divalent metal cation as cofactor.

It is found in the cytoplasm. It catalyses the reaction coproporphyrinogen III + O2 + 2 H(+) = protoporphyrinogen IX + 2 CO2 + 2 H2O. The protein operates within porphyrin-containing compound metabolism; protoporphyrin-IX biosynthesis; protoporphyrinogen-IX from coproporphyrinogen-III (O2 route): step 1/1. Functionally, involved in the heme biosynthesis. Catalyzes the aerobic oxidative decarboxylation of propionate groups of rings A and B of coproporphyrinogen-III to yield the vinyl groups in protoporphyrinogen-IX. In Francisella tularensis subsp. novicida (strain U112), this protein is Oxygen-dependent coproporphyrinogen-III oxidase.